An 82-amino-acid chain; its full sequence is Cytochrome b-c1 complex subunit 8 (82 aa).

Residues 1-39 lie on the Mitochondrial matrix side of the membrane; it reads MGREFGNLTRMRHVISYSLSPFEQRAHPHVFTKGIPNVL. Ser-16 carries the post-translational modification Phosphoserine. An N6-acetyllysine; alternate modification is found at Lys-33. At Lys-33 the chain carries N6-succinyllysine; alternate. Residues 40-68 traverse the membrane as a helical segment; the sequence is RRFRESFFRVAPQFVVFYLIYTWGTEEFE. The Mitochondrial intermembrane portion of the chain corresponds to 69–82; that stretch reads RSKRKNPAAYENDK.

It belongs to the UQCRQ/QCR8 family. Component of the ubiquinol-cytochrome c oxidoreductase (cytochrome b-c1 complex, complex III, CIII), a multisubunit enzyme composed of 11 subunits. The complex is composed of 3 respiratory subunits cytochrome b, cytochrome c1 and Rieske protein UQCRFS1, 2 core protein subunits UQCRC1/QCR1 and UQCRC2/QCR2, and 6 low-molecular weight protein subunits UQCRH/QCR6, UQCRB/QCR7, UQCRQ/QCR8, UQCR10/QCR9, UQCR11/QCR10 and subunit 9, the cleavage product of Rieske protein UQCRFS1. The complex exists as an obligatory dimer and forms supercomplexes (SCs) in the inner mitochondrial membrane with NADH-ubiquinone oxidoreductase (complex I, CI) and cytochrome c oxidase (complex IV, CIV), resulting in different assemblies (supercomplex SCI(1)III(2)IV(1) and megacomplex MCI(2)III(2)IV(2)). Interacts with UQCC6.

Its subcellular location is the mitochondrion inner membrane. Functionally, component of the ubiquinol-cytochrome c oxidoreductase, a multisubunit transmembrane complex that is part of the mitochondrial electron transport chain which drives oxidative phosphorylation. The respiratory chain contains 3 multisubunit complexes succinate dehydrogenase (complex II, CII), ubiquinol-cytochrome c oxidoreductase (cytochrome b-c1 complex, complex III, CIII) and cytochrome c oxidase (complex IV, CIV), that cooperate to transfer electrons derived from NADH and succinate to molecular oxygen, creating an electrochemical gradient over the inner membrane that drives transmembrane transport and the ATP synthase. The cytochrome b-c1 complex catalyzes electron transfer from ubiquinol to cytochrome c, linking this redox reaction to translocation of protons across the mitochondrial inner membrane, with protons being carried across the membrane as hydrogens on the quinol. In the process called Q cycle, 2 protons are consumed from the matrix, 4 protons are released into the intermembrane space and 2 electrons are passed to cytochrome c. The polypeptide is Cytochrome b-c1 complex subunit 8 (UQCRQ) (Pongo abelii (Sumatran orangutan)).